The following is a 243-amino-acid chain: MSSIYLGVNIDHVATLRNARGTKYPDPVHAAEVAERAGADGITIHLREDRRHITDRDVRILRETLQTRMNLEMAVTDEMIEIALKTQPEYVCLVPEKREELTTEGGLDVAGHLDKIKAATEKLTAAGIKVSLFIDADREQIDAAKACGAPFIELHTGHYADAATEADQLDELKKIAAGASYAADLGITVNAGHGLTYHNVAPIAALPEIYELNIGHAIIGRAVFDGLHKAVADMKAIMVAARQ.

Asn-9 contributes to the 3-amino-2-oxopropyl phosphate binding site. Residue 11 to 12 (DH) coordinates 1-deoxy-D-xylulose 5-phosphate. Residue Arg-20 coordinates 3-amino-2-oxopropyl phosphate. Residue His-45 is the Proton acceptor of the active site. Positions 47 and 52 each coordinate 1-deoxy-D-xylulose 5-phosphate. Glu-72 acts as the Proton acceptor in catalysis. Thr-102 contacts 1-deoxy-D-xylulose 5-phosphate. His-193 (proton donor) is an active-site residue. 3-amino-2-oxopropyl phosphate contacts are provided by residues Gly-194 and 215–216 (GH).

The protein belongs to the PNP synthase family. In terms of assembly, homooctamer; tetramer of dimers.

It localises to the cytoplasm. The enzyme catalyses 3-amino-2-oxopropyl phosphate + 1-deoxy-D-xylulose 5-phosphate = pyridoxine 5'-phosphate + phosphate + 2 H2O + H(+). Its pathway is cofactor biosynthesis; pyridoxine 5'-phosphate biosynthesis; pyridoxine 5'-phosphate from D-erythrose 4-phosphate: step 5/5. Functionally, catalyzes the complicated ring closure reaction between the two acyclic compounds 1-deoxy-D-xylulose-5-phosphate (DXP) and 3-amino-2-oxopropyl phosphate (1-amino-acetone-3-phosphate or AAP) to form pyridoxine 5'-phosphate (PNP) and inorganic phosphate. This chain is Pyridoxine 5'-phosphate synthase, found in Vibrio vulnificus (strain CMCP6).